The following is a 938-amino-acid chain: Microperfuranone synthase (938 aa).

The interval 44–445 (TSTRISYAEL…AGRTKDTIIV (402 aa)) is adenylation (A) domain. In terms of domain architecture, Carrier spans 579–655 (SDSERAVQKA…AIARSIDSSR (77 aa)). The thiolation and peptide carrier (T) domain stretch occupies residues 581–652 (SERAVQKALV…TPGAIARSID (72 aa)). The residue at position 613 (S613) is an O-(pantetheine 4'-phosphoryl)serine. A thioesterase (TE) domain region spans residues 676–923 (PLFCIHPGSG…AKMLNREHIA (248 aa)). The active site involves S746.

This sequence belongs to the ATP-dependent AMP-binding enzyme family.

The protein operates within secondary metabolite biosynthesis. Its function is as follows. Microperfuranone synthase is the only protein required for the biosynthesis of the secondary metabolite microperfuranone from phenylpyruvic acid (PPA). Several steps for the microperfuranione biosynthesis have been proposed. These steps include the activation of PPA, by the micA adenylation (A) domain to AMP-phenylpyruvic acid followed by loading of the PPA unit to the thiolation and peptide carrier (T) domain and eventually transferring to the thioesterase (TE) domain. After loading another PPA unit onto the T domain, aldol condensation establishes the carbon-carbon bond between the alpha- and beta-carbon of the two PPA units. Sulfur-assisted furan ring formation, TE domain mediated hydrolysis, decarboxylation, and keto-enol tautomerization would generate microperfuranone attached to the T domain. Finally, microperfuranone is released by the TE domain. The polypeptide is Microperfuranone synthase (Emericella nidulans (strain FGSC A4 / ATCC 38163 / CBS 112.46 / NRRL 194 / M139) (Aspergillus nidulans)).